Consider the following 145-residue polypeptide: uncharacterized protein (145 aa).

It belongs to the asfivirus K145R family.

The protein localises to the virion. This is an uncharacterized protein from African swine fever virus (isolate Pig/Kenya/KEN-50/1950) (ASFV).